Consider the following 73-residue polypeptide: Disintegrin barbourin (73 aa).

In terms of domain architecture, Disintegrin spans 1-73; it reads EAGEECDCGS…ADCPRNGLYG (73 aa). 6 cysteine pairs are disulfide-bonded: C6–C21, C8–C16, C15–C38, C29–C35, C34–C59, and C47–C66. Residues 51 to 53 carry the Cell attachment site; atypical (KGD) motif; the sequence is KGD.

The protein belongs to the venom metalloproteinase (M12B) family. P-II subfamily. P-IIa sub-subfamily. In terms of assembly, monomer. As to expression, expressed by the venom gland.

Its subcellular location is the secreted. Its function is as follows. Inhibitor of ligand binding to the integrins alpha-IIb/beta-3 (ITGA2B/ITGB3). Competition with fibrinogen for the RGD recognition sites on the alpha-IIb/beta-3 integrin results in the inhibition of platelet aggregation induced by ADP, thrombin, platelet-activating factor and collagen. The polypeptide is Disintegrin barbourin (Sistrurus miliarius barbouri (Dusky pigmy rattlesnake)).